We begin with the raw amino-acid sequence, 115 residues long: Movement protein TGB2 (115 aa).

Topologically, residues 1–13 (MSAQGHRLTAPVN) are cytoplasmic. Residues 14–34 (SEKVYIVLGLSFALISITFLL) traverse the membrane as a helical segment. At 35–74 (SRNNLPHVGDNIHSLPHGDAYRDGTKAILYNSPNFGSRTS) the chain is on the lumenal side. The chain crosses the membrane as a helical span at residues 75–95 (LNNSKNAAFAAVLLLSLLIYG). Residues 96–115 (SRCLSQRNHLCACGNNHSSN) lie on the Cytoplasmic side of the membrane.

Belongs to the Tymovirales TGBp2 protein family.

It is found in the host endoplasmic reticulum membrane. Plays a role in viral cell-to-cell propagation, by facilitating genome transport to neighboring plant cells through plasmosdesmata,. This chain is Movement protein TGB2, found in Potato virus X (strain HB) (PVX).